A 385-amino-acid chain; its full sequence is Effector protein hopAB3 (385 aa).

3 disordered regions span residues 1 to 61, 73 to 139, and 215 to 293; these read MVGI…AGRP, TREW…SPLY, and ADSQ…PRIN. A host recognition region spans residues 1 to 333; the sequence is MVGISGRAGP…INMEDLRAAL (333 aa). Over residues 217 to 234 the composition is skewed to low complexity; the sequence is SQQAARAPARTPPRSSVR. Composition is skewed to polar residues over residues 245–256 and 265–283; these read ATESSSGSNQRS and MTSNQRRPSSASNASTSQR.

The protein belongs to the HopAB family. Interacts physically with plant cell Pto.

The protein resides in the secreted. Functionally, effector protein involved in gene-for-gene resistance in tomato plants. It is recognized by the host Pto resistance protein and elicits Pto and Prf-dependent hypersensitive response (HR) and programmed cell death (PCD), resulting in host immunity. In susceptible plants, promotes virulence, in part, by enhancing the development of disease symptoms and bacterial growth. The chain is Effector protein hopAB3 (hopAB3) from Pseudomonas syringae pv. maculicola.